A 297-amino-acid polypeptide reads, in one-letter code: uncharacterized protein (297 aa).

Polar residues predominate over residues 1–12 (MASYSFQFSTDA). The interval 1-21 (MASYSFQFSTDATGKPGAAKP) is disordered.

The protein to B.subtilis XkdY/XepA.

This is an uncharacterized protein from Bacillus subtilis (strain 168).